Here is a 440-residue protein sequence, read N- to C-terminus: Enolase (440 aa).

An igE-binding determinant region spans residues 120–189 (KAAAAEKRVP…TEAMRQGAEV (70 aa)). His159 and Glu168 together coordinate substrate. The active-site Proton donor is Glu211. Mg(2+)-binding residues include Asp246, Glu297, and Asp324. Residues Glu297 and Asp324 each coordinate substrate. Lys349 serves as the catalytic Proton acceptor. Residues 376–379 (SHRS) and Lys400 each bind substrate.

This sequence belongs to the enolase family. As to quaternary structure, homodimer. Mg(2+) serves as cofactor.

The protein localises to the cytoplasm. The catalysed reaction is (2R)-2-phosphoglycerate = phosphoenolpyruvate + H2O. It participates in carbohydrate degradation; glycolysis; pyruvate from D-glyceraldehyde 3-phosphate: step 4/5. The chain is Enolase (ENO) from Davidiella tassiana (Mycosphaerella tassiana).